The following is a 368-amino-acid chain: 4-hydroxy-3-methylbut-2-en-1-yl diphosphate synthase (flavodoxin) (368 aa).

4 residues coordinate [4Fe-4S] cluster: Cys271, Cys274, Cys306, and Glu313.

This sequence belongs to the IspG family. It depends on [4Fe-4S] cluster as a cofactor.

It catalyses the reaction (2E)-4-hydroxy-3-methylbut-2-enyl diphosphate + oxidized [flavodoxin] + H2O + 2 H(+) = 2-C-methyl-D-erythritol 2,4-cyclic diphosphate + reduced [flavodoxin]. It participates in isoprenoid biosynthesis; isopentenyl diphosphate biosynthesis via DXP pathway; isopentenyl diphosphate from 1-deoxy-D-xylulose 5-phosphate: step 5/6. Converts 2C-methyl-D-erythritol 2,4-cyclodiphosphate (ME-2,4cPP) into 1-hydroxy-2-methyl-2-(E)-butenyl 4-diphosphate. This Haemophilus influenzae (strain ATCC 51907 / DSM 11121 / KW20 / Rd) protein is 4-hydroxy-3-methylbut-2-en-1-yl diphosphate synthase (flavodoxin).